The chain runs to 360 residues: Phospho-N-acetylmuramoyl-pentapeptide-transferase (360 aa).

10 helical membrane passes run 26 to 46 (AILG…KLIE), 74 to 94 (MGGL…GDLG), 97 to 117 (YVWV…IDDY), 134 to 154 (YILQ…TAAN), 168 to 188 (VMPQ…VGSS), 199 to 219 (GLAI…AYLS), 236 to 256 (SGEL…FLWF), 263 to 283 (VFMG…IAVL), 288 to 308 (ILLV…ILQV), and 338 to 358 (VIVR…ATLK).

The protein belongs to the glycosyltransferase 4 family. MraY subfamily. It depends on Mg(2+) as a cofactor.

It is found in the cell inner membrane. The catalysed reaction is UDP-N-acetyl-alpha-D-muramoyl-L-alanyl-gamma-D-glutamyl-meso-2,6-diaminopimeloyl-D-alanyl-D-alanine + di-trans,octa-cis-undecaprenyl phosphate = di-trans,octa-cis-undecaprenyl diphospho-N-acetyl-alpha-D-muramoyl-L-alanyl-D-glutamyl-meso-2,6-diaminopimeloyl-D-alanyl-D-alanine + UMP. It participates in cell wall biogenesis; peptidoglycan biosynthesis. Catalyzes the initial step of the lipid cycle reactions in the biosynthesis of the cell wall peptidoglycan: transfers peptidoglycan precursor phospho-MurNAc-pentapeptide from UDP-MurNAc-pentapeptide onto the lipid carrier undecaprenyl phosphate, yielding undecaprenyl-pyrophosphoryl-MurNAc-pentapeptide, known as lipid I. The chain is Phospho-N-acetylmuramoyl-pentapeptide-transferase from Shewanella putrefaciens (strain CN-32 / ATCC BAA-453).